A 343-amino-acid chain; its full sequence is Anthranilate phosphoribosyltransferase (343 aa).

5-phospho-alpha-D-ribose 1-diphosphate contacts are provided by residues Gly-81, 84 to 85 (GD), 91 to 94 (NVST), 109 to 117 (KHGNRSVSS), and Ser-121. Anthranilate is bound at residue Gly-81. Ser-93 serves as a coordination point for Mg(2+). Asn-112 is a binding site for anthranilate. Arg-167 contributes to the anthranilate binding site. Asp-226 and Glu-227 together coordinate Mg(2+).

The protein belongs to the anthranilate phosphoribosyltransferase family. In terms of assembly, homodimer. The cofactor is Mg(2+).

The enzyme catalyses N-(5-phospho-beta-D-ribosyl)anthranilate + diphosphate = 5-phospho-alpha-D-ribose 1-diphosphate + anthranilate. The protein operates within amino-acid biosynthesis; L-tryptophan biosynthesis; L-tryptophan from chorismate: step 2/5. Functionally, catalyzes the transfer of the phosphoribosyl group of 5-phosphorylribose-1-pyrophosphate (PRPP) to anthranilate to yield N-(5'-phosphoribosyl)-anthranilate (PRA). The chain is Anthranilate phosphoribosyltransferase from Chromohalobacter salexigens (strain ATCC BAA-138 / DSM 3043 / CIP 106854 / NCIMB 13768 / 1H11).